We begin with the raw amino-acid sequence, 478 residues long: Abscisate beta-glucosyltransferase (478 aa).

H20 acts as the Proton acceptor in catalysis. H20 is a binding site for an anthocyanidin. The Charge relay role is filled by D108. The UDP-alpha-D-glucose site is built by A340, Q342, H357, W360, N361, S362, and E365. A380 serves as a coordination point for an anthocyanidin. UDP-alpha-D-glucose contacts are provided by E381 and Q382.

Belongs to the UDP-glycosyltransferase family.

The catalysed reaction is 2-cis-(+)-abscisate + UDP-alpha-D-glucose = beta-D-glucopyranosyl cis-(+)-abscisate + UDP. Its function is as follows. Glucosyltransferase involved in the catabolism of abscisic acid (ABA). Adds a glucosyl group at the C-1 position of ABA; (S)-2-trans-abscisate is a better substrate than the natural (+)-S-abscisate or its enantiomer (-)-R-abscisate. No activity with (-)-phaseic acid (PA), methylated-ABA or with other hormones such as jasmonate, zeatin, auxin (IAA) or gibberellin A3 (GA3). The sequence is that of Abscisate beta-glucosyltransferase (AOG) from Phaseolus angularis (Azuki bean).